Consider the following 449-residue polypeptide: UDP-glycosyltransferase 76E7 (449 aa).

UDP-alpha-D-glucose is bound by residues Ser275, 333–335 (APQ), 350–358 (HCGWNSTLE), and 372–375 (TTDQ).

This sequence belongs to the UDP-glycosyltransferase family.

This Arabidopsis thaliana (Mouse-ear cress) protein is UDP-glycosyltransferase 76E7 (UGT76E7).